We begin with the raw amino-acid sequence, 371 residues long: Chaperone protein DnaJ (371 aa).

Residues 5–70 enclose the J domain; sequence CYYEILNISK…SKRSRYDQFG (66 aa). The segment at 127–204 adopts a CR-type zinc-finger fold; sequence GVEKEITIPR…CYGNGKVKKQ (78 aa). Residues cysteine 140, cysteine 143, cysteine 156, cysteine 159, cysteine 178, cysteine 181, cysteine 192, and cysteine 195 each contribute to the Zn(2+) site. CXXCXGXG motif repeat units lie at residues 140-147, 156-163, 178-185, and 192-199; these read CDSCDGTG, CHACHGQG, CPVCNGTG, and CDACYGNG.

It belongs to the DnaJ family. As to quaternary structure, homodimer. Zn(2+) serves as cofactor.

Its subcellular location is the cytoplasm. Participates actively in the response to hyperosmotic and heat shock by preventing the aggregation of stress-denatured proteins and by disaggregating proteins, also in an autonomous, DnaK-independent fashion. Unfolded proteins bind initially to DnaJ; upon interaction with the DnaJ-bound protein, DnaK hydrolyzes its bound ATP, resulting in the formation of a stable complex. GrpE releases ADP from DnaK; ATP binding to DnaK triggers the release of the substrate protein, thus completing the reaction cycle. Several rounds of ATP-dependent interactions between DnaJ, DnaK and GrpE are required for fully efficient folding. Also involved, together with DnaK and GrpE, in the DNA replication of plasmids through activation of initiation proteins. This Francisella tularensis subsp. holarctica (strain LVS) protein is Chaperone protein DnaJ.